Consider the following 514-residue polypeptide: WD repeat-containing protein 26 (514 aa).

The CTLH domain occupies 9–84 (EHPSATKFRN…EYLEDGKVLE (76 aa)). WD repeat units lie at residues 206 to 245 (EHCN…HLLK), 252 to 291 (GHAY…GELR), 297 to 337 (SHED…DSWE), 377 to 416 (QEDH…LVRK), 419 to 461 (GVTQ…PIAE), and 464 to 504 (GHTR…DHQN).

Forms homooligomers. Identified in the CTLH complex that contains GID4, RANBP9 and/or RANBP10, MKLN1, MAEA, RMND5A (or alternatively its paralog RMND5B), GID8, ARMC8, WDR26 and YPEL5. Within this complex, MAEA, RMND5A (or alternatively its paralog RMND5B), GID8, WDR26, and RANBP9 and/or RANBP10 form the catalytic core, while GID4, MKLN1, ARMC8 and YPEL5 have ancillary roles. Interacts with DDB1-CUL4A/B E3 ligase complexes. Forms a complex composed of at least WDR26, a G-beta:gamma unit, and PLCB2. Interacts with AXIN1.

It is found in the cytoplasm. Its subcellular location is the nucleus. The protein localises to the mitochondrion. In terms of biological role, G-beta-like protein involved in cell signal transduction. Acts as a negative regulator in MAPK signaling pathway. Functions as a scaffolding protein to promote G beta:gamma-mediated PLCB2 plasma membrane translocation and subsequent activation in leukocytes. Core component of the CTLH E3 ubiquitin-protein ligase complex that selectively accepts ubiquitin from UBE2H and mediates ubiquitination and subsequent proteasomal degradation of the transcription factor HBP1. Acts as a negative regulator of the canonical Wnt signaling pathway through preventing ubiquitination of beta-catenin CTNNB1 by the beta-catenin destruction complex, thus negatively regulating CTNNB1 degradation. Protects cells from oxidative stress-induced apoptosis via the down-regulation of AP-1 transcriptional activity as well as by inhibiting cytochrome c release from mitochondria. Also protects cells by promoting hypoxia-mediated autophagy and mitophagy. This Rattus norvegicus (Rat) protein is WD repeat-containing protein 26 (Wdr26).